Here is a 263-residue protein sequence, read N- to C-terminus: Ubiquinone/menaquinone biosynthesis C-methyltransferase UbiE (263 aa).

Residues T86, D107, and S152 each coordinate S-adenosyl-L-methionine.

It belongs to the class I-like SAM-binding methyltransferase superfamily. MenG/UbiE family.

The catalysed reaction is a 2-demethylmenaquinol + S-adenosyl-L-methionine = a menaquinol + S-adenosyl-L-homocysteine + H(+). It catalyses the reaction a 2-methoxy-6-(all-trans-polyprenyl)benzene-1,4-diol + S-adenosyl-L-methionine = a 5-methoxy-2-methyl-3-(all-trans-polyprenyl)benzene-1,4-diol + S-adenosyl-L-homocysteine + H(+). It participates in quinol/quinone metabolism; menaquinone biosynthesis; menaquinol from 1,4-dihydroxy-2-naphthoate: step 2/2. Its pathway is cofactor biosynthesis; ubiquinone biosynthesis. Its function is as follows. Methyltransferase required for the conversion of demethylmenaquinol (DMKH2) to menaquinol (MKH2) and the conversion of 2-polyprenyl-6-methoxy-1,4-benzoquinol (DDMQH2) to 2-polyprenyl-3-methyl-6-methoxy-1,4-benzoquinol (DMQH2). The sequence is that of Ubiquinone/menaquinone biosynthesis C-methyltransferase UbiE from Brucella anthropi (strain ATCC 49188 / DSM 6882 / CCUG 24695 / JCM 21032 / LMG 3331 / NBRC 15819 / NCTC 12168 / Alc 37) (Ochrobactrum anthropi).